Consider the following 140-residue polypeptide: Fatty acid-binding protein 12 (140 aa).

A fatty acid is bound by residues arginine 107 and arginine 127–tyrosine 129.

This sequence belongs to the calycin superfamily. Fatty-acid binding protein (FABP) family. Expressed in a number of retinoblastoma cell lines.

Functionally, may play a role in lipid transport. This chain is Fatty acid-binding protein 12 (FABP12), found in Homo sapiens (Human).